The primary structure comprises 96 residues: Co-chaperonin GroES (96 aa).

Belongs to the GroES chaperonin family. In terms of assembly, heptamer of 7 subunits arranged in a ring. Interacts with the chaperonin GroEL.

It is found in the cytoplasm. In terms of biological role, together with the chaperonin GroEL, plays an essential role in assisting protein folding. The GroEL-GroES system forms a nano-cage that allows encapsulation of the non-native substrate proteins and provides a physical environment optimized to promote and accelerate protein folding. GroES binds to the apical surface of the GroEL ring, thereby capping the opening of the GroEL channel. This is Co-chaperonin GroES from Haemophilus influenzae (strain 86-028NP).